Reading from the N-terminus, the 220-residue chain is Deoxyribose-phosphate aldolase (220 aa).

Residue Asp89 is the Proton donor/acceptor of the active site. The Schiff-base intermediate with acetaldehyde role is filled by Lys151. The Proton donor/acceptor role is filled by Lys180.

This sequence belongs to the DeoC/FbaB aldolase family. DeoC type 1 subfamily.

The protein resides in the cytoplasm. The enzyme catalyses 2-deoxy-D-ribose 5-phosphate = D-glyceraldehyde 3-phosphate + acetaldehyde. The protein operates within carbohydrate degradation; 2-deoxy-D-ribose 1-phosphate degradation; D-glyceraldehyde 3-phosphate and acetaldehyde from 2-deoxy-alpha-D-ribose 1-phosphate: step 2/2. In terms of biological role, catalyzes a reversible aldol reaction between acetaldehyde and D-glyceraldehyde 3-phosphate to generate 2-deoxy-D-ribose 5-phosphate. The protein is Deoxyribose-phosphate aldolase of Deinococcus radiodurans (strain ATCC 13939 / DSM 20539 / JCM 16871 / CCUG 27074 / LMG 4051 / NBRC 15346 / NCIMB 9279 / VKM B-1422 / R1).